Reading from the N-terminus, the 398-residue chain is UPF0229 protein Ccel_0490 (398 aa).

Disordered regions lie at residues 1 to 22 (MAIF…RRRH) and 68 to 104 (KSKP…NSEG). Composition is skewed to basic and acidic residues over residues 11 to 22 (GKDRSAEDRRRH) and 78 to 95 (GNEK…EGKG).

This sequence belongs to the UPF0229 family.

The polypeptide is UPF0229 protein Ccel_0490 (Ruminiclostridium cellulolyticum (strain ATCC 35319 / DSM 5812 / JCM 6584 / H10) (Clostridium cellulolyticum)).